Reading from the N-terminus, the 225-residue chain is Protein-disulfide oxidoreductase DsbI (225 aa).

The chain crosses the membrane as a helical span at residues Phe27 to Phe47. A disulfide bridge links Cys56 with Cys59. The next 2 membrane-spanning stretches (helical) occupy residues Ala65–Leu85 and Leu87–Leu107. Cys128 and Cys154 are disulfide-bonded. A helical membrane pass occupies residues Cys199–Leu219.

This sequence belongs to the DsbB family. DsbI subfamily. As to quaternary structure, interacts with DsbL.

The protein localises to the cell inner membrane. Its function is as follows. Required for disulfide bond formation in some proteins. Part of a redox system composed of DsbI and DsbL that mediates formation of an essential disulfide bond in AssT. In Salmonella choleraesuis (strain SC-B67), this protein is Protein-disulfide oxidoreductase DsbI.